A 626-amino-acid chain; its full sequence is Chaperone protein DnaK (626 aa).

Threonine 197 is modified (phosphothreonine; by autocatalysis). Low complexity predominate over residues 595-614; it reads QNMAQQQQAQGGAQQQNQNK. The disordered stretch occupies residues 595-626; that stretch reads QNMAQQQQAQGGAQQQNQNKGGDDDVIDAEVE.

Belongs to the heat shock protein 70 family.

Acts as a chaperone. The polypeptide is Chaperone protein DnaK (Nautilia profundicola (strain ATCC BAA-1463 / DSM 18972 / AmH)).